Reading from the N-terminus, the 181-residue chain is Cyclic AMP-dependent transcription factor ATF-3 (181 aa).

The tract at residues 76 to 96 is disordered; that stretch reads VTKSEVAPEEDERKRRRRERN. K78 is covalently cross-linked (Glycyl lysine isopeptide (Lys-Gly) (interchain with G-Cter in SUMO2)). Residues 86 to 149 enclose the bZIP domain; sequence DERKRRRRER…QHLIYMLNLH (64 aa). The basic motif stretch occupies residues 88 to 110; sequence RKRRRRERNKIAAAKCRNKKKEK. A leucine-zipper region spans residues 114 to 142; sequence LQKESEKLESVNAELKAQIEELKNEKQHL. T162 is modified (phosphothreonine). Residue K175 forms a Glycyl lysine isopeptide (Lys-Gly) (interchain with G-Cter in SUMO2) linkage.

The protein belongs to the bZIP family. ATF subfamily. As to quaternary structure, ATF3 alone can bind DNA, but it preferentially forms heteromeric complexes with JUN and JUNB and does not interact with FOS. Expressed in tissues containing skeletal muscle or smooth muscle. Expressed in cutaneous and muscular sensory neurons.

It localises to the nucleus. This protein binds the cAMP response element (CRE) (consensus: 5'-GTGACGT[AC][AG]-3'), a sequence present in many viral and cellular promoters. Represses transcription from promoters with ATF sites. It may repress transcription by stabilizing the binding of inhibitory cofactors at the promoter. This Rattus norvegicus (Rat) protein is Cyclic AMP-dependent transcription factor ATF-3 (Atf3).